Reading from the N-terminus, the 504-residue chain is Anaerobic nitric oxide reductase transcription regulator NorR (504 aa).

At aspartate 57 the chain carries 4-aspartylphosphate. The Sigma-54 factor interaction domain maps to 187–416 (MIGLSPGMTQ…LEHAIHRAVV (230 aa)). Residues 215 to 222 (GETGTGKE) and 278 to 287 (ADNGTLFLDE) contribute to the ATP site. A DNA-binding region (H-T-H motif) is located at residues 479-498 (WAACARMLETDVANLHRLAK).

The protein operates within nitrogen metabolism; nitric oxide reduction. Its function is as follows. Required for the expression of anaerobic nitric oxide (NO) reductase, acts as a transcriptional activator for at least the norVW operon. Activation also requires sigma-54. The sequence is that of Anaerobic nitric oxide reductase transcription regulator NorR from Escherichia coli O81 (strain ED1a).